The chain runs to 930 residues: Isoleucine--tRNA ligase (930 aa).

The 'HIGH' region motif lies at 57 to 67; sequence PYANGNIHVGH. Glu-554 lines the L-isoleucyl-5'-AMP pocket. The 'KMSKS' region motif lies at 595-599; that stretch reads KMSKS. Lys-598 contributes to the ATP binding site.

The protein belongs to the class-I aminoacyl-tRNA synthetase family. IleS type 1 subfamily. As to quaternary structure, monomer.

The protein resides in the cytoplasm. It catalyses the reaction tRNA(Ile) + L-isoleucine + ATP = L-isoleucyl-tRNA(Ile) + AMP + diphosphate. Functionally, catalyzes the attachment of isoleucine to tRNA(Ile). As IleRS can inadvertently accommodate and process structurally similar amino acids such as valine, to avoid such errors it has two additional distinct tRNA(Ile)-dependent editing activities. One activity is designated as 'pretransfer' editing and involves the hydrolysis of activated Val-AMP. The other activity is designated 'posttransfer' editing and involves deacylation of mischarged Val-tRNA(Ile). The sequence is that of Isoleucine--tRNA ligase from Streptococcus agalactiae serotype Ia (strain ATCC 27591 / A909 / CDC SS700).